A 204-amino-acid polypeptide reads, in one-letter code: Large ribosomal subunit protein bL25 (204 aa).

Belongs to the bacterial ribosomal protein bL25 family. CTC subfamily. As to quaternary structure, part of the 50S ribosomal subunit; part of the 5S rRNA/L5/L18/L25 subcomplex. Contacts the 5S rRNA. Binds to the 5S rRNA independently of L5 and L18.

Functionally, this is one of the proteins that binds to the 5S RNA in the ribosome where it forms part of the central protuberance. In Bordetella bronchiseptica (strain ATCC BAA-588 / NCTC 13252 / RB50) (Alcaligenes bronchisepticus), this protein is Large ribosomal subunit protein bL25.